A 337-amino-acid polypeptide reads, in one-letter code: Viral cathepsin (337 aa).

The signal sequence occupies residues 1–18; sequence MYLIYYYTIIAVATASIA. Positions 19-126 are cleaved as a propeptide — activation peptide; that stretch reads NEKIFYDIDS…VTVAGPSART (108 aa). Cystine bridges form between cysteine 147–cysteine 188, cysteine 181–cysteine 221, and cysteine 276–cysteine 324. Residue cysteine 150 is part of the active site. Residues histidine 283 and asparagine 303 contribute to the active site.

The protein belongs to the peptidase C1 family. Synthesized as an inactive proenzyme and activated by proteolytic removal of the inhibitory propeptide.

It catalyses the reaction Endopeptidase of broad specificity, hydrolyzing substrates of both cathepsin L and cathepsin B.. Its function is as follows. Cysteine protease that plays an essential role in host liquefaction to facilitate horizontal transmission of the virus. May participate in the degradation of foreign protein expressed by the baculovirus system. This is Viral cathepsin (VCATH) from Spodoptera litura multicapsid nucleopolyhedrovirus (SpltMNPV).